Reading from the N-terminus, the 595-residue chain is Probable serine/threonine-protein kinase fhkC (595 aa).

Residues 1 to 84 (MNSNKEETTA…MTEDNSKEED (84 aa)) are disordered. A compositionally biased stretch (low complexity) spans 18–31 (EEQQQQQQPQQQEQ). Polar residues predominate over residues 32–49 (INTTTASTTSNGENTASD). Residues 50-70 (NNNNSNNNNNNNTNNTNTNNN) show a composition bias toward low complexity. One can recognise an FHA domain in the interval 116-170 (IILGRSKGVCNYTFTSPTVSGKHCKIYRDPTVKSRNVAFVDDTSTNGTFINNEVI). The Protein kinase domain occupies 218–479 (YDLREVLGTG…IDQALNHPWF (262 aa)). Residues 224 to 232 (LGTGNFASV) and lysine 247 each bind ATP. Aspartate 342 (proton acceptor) is an active-site residue. Threonine 377 is modified (phosphothreonine; by autocatalysis). The tract at residues 494 to 595 (KLEFPPPSTN…DEHEQKKVKN (102 aa)) is disordered. A compositionally biased stretch (polar residues) spans 508–520 (PTPNTTSSNSQLV). Over residues 530-567 (DNTTDNNNNNNNNNNNNNNNNNNNTTNNSNNIDNNNGN) the composition is skewed to low complexity. Basic and acidic residues predominate over residues 585-595 (NDEHEQKKVKN).

This sequence belongs to the protein kinase superfamily. CAMK Ser/Thr protein kinase family. CHK2 subfamily.

The enzyme catalyses L-seryl-[protein] + ATP = O-phospho-L-seryl-[protein] + ADP + H(+). It carries out the reaction L-threonyl-[protein] + ATP = O-phospho-L-threonyl-[protein] + ADP + H(+). The chain is Probable serine/threonine-protein kinase fhkC (fhkC) from Dictyostelium discoideum (Social amoeba).